Here is an 849-residue protein sequence, read N- to C-terminus: DNA mismatch repair protein MutS (849 aa).

ATP is bound at residue 665–672; the sequence is GPNMAGKS.

It belongs to the DNA mismatch repair MutS family.

Functionally, this protein is involved in the repair of mismatches in DNA. It is possible that it carries out the mismatch recognition step. This protein has a weak ATPase activity. This is DNA mismatch repair protein MutS from Wolbachia pipientis wMel.